A 61-amino-acid chain; its full sequence is MYYTGAEGSVFPGCYWGSYGYPLGYSVGCGYGSTYSPVGYGLGYGYNGCGAYRRYWPFALY.

An 11 X 2 AA repeats of G-[YCGS] region spans residues 13 to 49 (GCYWGSYGYPLGYSVGCGYGSTYSPVGYGLGYGYNGC).

It belongs to the KRTAP type 8 family. In terms of assembly, interacts with hair keratins. In terms of tissue distribution, expression restricted exclusively to the cortical cells of hair follicles.

In the hair cortex, hair keratin intermediate filaments are embedded in an interfilamentous matrix, consisting of hair keratin-associated proteins (KRTAP), which are essential for the formation of a rigid and resistant hair shaft through their extensive disulfide bond cross-linking with abundant cysteine residues of hair keratins. The matrix proteins include the high-sulfur and high-glycine-tyrosine keratins. The polypeptide is Keratin-associated protein 8-1 (Krtap8-1) (Mus musculus (Mouse)).